A 264-amino-acid polypeptide reads, in one-letter code: Mitochondrial distribution and morphology protein 12 (264 aa).

One can recognise an SMP-LTD domain in the interval 1-232 (MSFDINWNKI…WPSWINLDFN (232 aa)). The tract at residues 240–264 (ESSSSAEESLPHRDDAQDFSADARA) is disordered. Residues 248 to 264 (SLPHRDDAQDFSADARA) show a composition bias toward basic and acidic residues.

The protein belongs to the MDM12 family. As to quaternary structure, component of the ER-mitochondria encounter structure (ERMES) or MDM complex, composed of MMM1, MDM10, MDM12 and MDM34. An MMM1 homodimer associates with one molecule of MDM12 on each side in a pairwise head-to-tail manner, and the SMP-LTD domains of MMM1 and MDM12 generate a continuous hydrophobic tunnel for phospholipid trafficking.

The protein localises to the mitochondrion outer membrane. Its subcellular location is the endoplasmic reticulum membrane. Its function is as follows. Component of the ERMES/MDM complex, which serves as a molecular tether to connect the endoplasmic reticulum (ER) and mitochondria. Components of this complex are involved in the control of mitochondrial shape and protein biogenesis, and function in nonvesicular lipid trafficking between the ER and mitochondria. MDM12 is required for the interaction of the ER-resident membrane protein MMM1 and the outer mitochondrial membrane-resident beta-barrel protein MDM10. The MDM12-MMM1 subcomplex functions in the major beta-barrel assembly pathway that is responsible for biogenesis of all mitochondrial outer membrane beta-barrel proteins, and acts in a late step after the SAM complex. The MDM10-MDM12-MMM1 subcomplex further acts in the TOM40-specific pathway after the action of the MDM12-MMM1 complex. Essential for establishing and maintaining the structure of mitochondria and maintenance of mtDNA nucleoids. The polypeptide is Mitochondrial distribution and morphology protein 12 (Eremothecium gossypii (strain ATCC 10895 / CBS 109.51 / FGSC 9923 / NRRL Y-1056) (Yeast)).